We begin with the raw amino-acid sequence, 351 residues long: MEEEKILESDLRHISFVMPKYTPIEKIGEGSFSVVYKALDAESGRYVALKAITRTSSPARVLDEMMFLKTLGGRKNCMGLLGCFRNEDQVVAVFPYFEPIDFREFISNANLADIKRYLHNLLIAIEHVHSNGIMHRDLKPGNFLYNKESGRGMLIDFGLAQYEEYSEGQHAEGGAKPAGPLLFFNSVVSKTKPPGYYERDGRPPMKAPRAGTRGFRAPEVLFRCQRQTGAIDMWSVGVIFLTILTTQYPFFYSSDDIDSIVEIATIFGHAEMRKAAKFYGRVWRSNIDSIPEERIPFETIVESLNPWAEVGSDGYDLLYRMLDLCSSSRITASDALSHPFFDDLKTHENCA.

Residues 21–341 (YTPIEKIGEG…ASDALSHPFF (321 aa)) form the Protein kinase domain. ATP is bound by residues 27-35 (IGEGSFSVV) and Lys-50. The active-site Proton acceptor is Asp-137.

Belongs to the protein kinase superfamily. Ser/Thr protein kinase family. CDC7 subfamily. The cofactor is Mg(2+).

The catalysed reaction is L-seryl-[protein] + ATP = O-phospho-L-seryl-[protein] + ADP + H(+). The enzyme catalyses L-threonyl-[protein] + ATP = O-phospho-L-threonyl-[protein] + ADP + H(+). In terms of biological role, serine/threonine-protein kinase. Needed for the initiation of DNA synthesis during mitosis as well as for synaptonemal complex formation and commitment to recombination during meiosis. The chain is Probable cell division control protein 7 homolog 2 (CDC7-2) from Encephalitozoon cuniculi (strain GB-M1) (Microsporidian parasite).